The primary structure comprises 498 residues: MRINPTTSDPEVSIREKKNLGRIAQIIGPVLDVAFPPGKMPNIYNALVVKGRDTLGQEINVTCEVQQLLGNNRVRAVAMSATEGLKRGMDVVDMGNPLSVPVGGATLGRIFNVLGEPVDNLGPVDTRTTSPIHKSAPAFIELDTKLSIFETGIKVVDLLAPYRRGGKIGLFGGAGVGKTVLIMELINNIAKAHGGVSVFGGVGERTREGNDLYMEMKESGVINEQNLAESKVALVYGQMNEPPGARMRVGLTALTMAEYFRDVNEQDVLLFIDNIFRFVQAGSEVSALLGRMPSAVGYQPTLSTEMGSLQERITSTKKGSITSIQAVYVPADDLTDPAPATTFAHLDATTVLSRGLAAKGIYPAVDPLDSTSTMLQPRIVGEEHYETAQQVKQTLQRYKELQDIIAILGLDELSEEDRLTVARARKIERFLSQPFFVAEVFTGSPGKYVGLAETIRGFKLILSGEFDSLPEQAFYLVGNIDEATAKATNLEMESKLKK.

T6 is modified (phosphothreonine). S13 bears the Phosphoserine mark. 172-179 (GGAGVGKT) is an ATP binding site.

Belongs to the ATPase alpha/beta chains family. As to quaternary structure, F-type ATPases have 2 components, CF(1) - the catalytic core - and CF(0) - the membrane proton channel. CF(1) has five subunits: alpha(3), beta(3), gamma(1), delta(1), epsilon(1). CF(0) has four main subunits: a(1), b(1), b'(1) and c(9-12).

The protein localises to the plastid. It localises to the chloroplast thylakoid membrane. The enzyme catalyses ATP + H2O + 4 H(+)(in) = ADP + phosphate + 5 H(+)(out). Its function is as follows. Produces ATP from ADP in the presence of a proton gradient across the membrane. The catalytic sites are hosted primarily by the beta subunits. The chain is ATP synthase subunit beta, chloroplastic from Arabis hirsuta (Hairy rock-cress).